Reading from the N-terminus, the 207-residue chain is Small ribosomal subunit protein uS4 (207 aa).

A disordered region spans residues 31–53; it reads KAKFDSKPGQHGRTSGARTSDFG. The S4 RNA-binding domain maps to 97–160; the sequence is SRLDNVVYRM…KKQNRIVEAL (64 aa).

It belongs to the universal ribosomal protein uS4 family. As to quaternary structure, part of the 30S ribosomal subunit. Contacts protein S5. The interaction surface between S4 and S5 is involved in control of translational fidelity.

Its function is as follows. One of the primary rRNA binding proteins, it binds directly to 16S rRNA where it nucleates assembly of the body of the 30S subunit. In terms of biological role, with S5 and S12 plays an important role in translational accuracy. The sequence is that of Small ribosomal subunit protein uS4 from Albidiferax ferrireducens (strain ATCC BAA-621 / DSM 15236 / T118) (Rhodoferax ferrireducens).